The primary structure comprises 156 residues: MMVLEKEDGVPMLSVQPKGKQKGCAGCNRKIKDRYLLKALDKYWHEDCLKCACCDCRLGEVGSTLYTKANLILCRRDYLRLFGTTGNCAACSKLIPAFEMVMRARDNVYHLDCFACQLCNQRFCVGDKFFLKNNMILCQMDYEEGQLNGSFDSQVQ.

LIM zinc-binding domains follow at residues 22–84 and 86–148; these read KGCA…LFGT and GNCA…GQLN.

The protein resides in the nucleus. In terms of biological role, may be involved in gene regulation within neural lineage cells potentially by direct DNA binding or by binding to other transcription factors. This Xenopus laevis (African clawed frog) protein is Rhombotin-1.